The following is a 227-amino-acid chain: Apoptosis regulator OPG045 (227 aa).

The protein belongs to the orthopoxvirus OPG045 family. As to quaternary structure, homodimer. Interacts with host pro-apoptotic protein BCL2L11 (via BH3 domain). Interacts with host NLRP1. Interacts with host BAK.

It is found in the host mitochondrion outer membrane. The protein resides in the host cytoplasm. In terms of biological role, plays a role in evading host innate immune response by inhibiting host inflammasome activation. Interacts with and inhibits NLR-mediated interleukin-1 beta/IL1B production in infected cells. At the host mitochondria outer membrane, interacts with the BH3 domain of host BAK and prevents BAK from binding active BAX. In turn, host apoptosis is inhibited. The sequence is that of Apoptosis regulator OPG045 (OPG045) from Oryctolagus cuniculus (Rabbit).